The sequence spans 431 residues: Glutamyl-tRNA reductase (431 aa).

Substrate is bound by residues 49–52 (TCNR), serine 109, 114–116 (EGQ), and glutamine 120. Cysteine 50 (nucleophile) is an active-site residue. 189 to 194 (GAGKMA) provides a ligand contact to NADP(+).

Belongs to the glutamyl-tRNA reductase family. As to quaternary structure, homodimer.

It catalyses the reaction (S)-4-amino-5-oxopentanoate + tRNA(Glu) + NADP(+) = L-glutamyl-tRNA(Glu) + NADPH + H(+). It functions in the pathway porphyrin-containing compound metabolism; protoporphyrin-IX biosynthesis; 5-aminolevulinate from L-glutamyl-tRNA(Glu): step 1/2. Its pathway is porphyrin-containing compound metabolism; chlorophyll biosynthesis. Its function is as follows. Catalyzes the NADPH-dependent reduction of glutamyl-tRNA(Glu) to glutamate 1-semialdehyde (GSA). The chain is Glutamyl-tRNA reductase from Synechococcus sp. (strain JA-3-3Ab) (Cyanobacteria bacterium Yellowstone A-Prime).